We begin with the raw amino-acid sequence, 27 residues long: MLVFQMRNVDKTSTVLKQTKNSDYADK.

Functionally, this peptide is involved in the control mechanism of the synthesis of the erythromycin resistance protein. The chain is 23S rRNA methylase leader peptide (ermC) from Enterococcus faecalis (Streptococcus faecalis).